Here is a 62-residue protein sequence, read N- to C-terminus: Protein P14 (62 aa).

Functionally, needed for optimal phage development. The protein is Protein P14 (P14) of Pseudomonas savastanoi pv. phaseolicola (Pseudomonas syringae pv. phaseolicola).